Reading from the N-terminus, the 454-residue chain is Carbamoyl phosphate synthase arginine-specific small chain (454 aa).

The N-terminal 29 residues, 1-29, are a transit peptide targeting the mitochondrion; that stretch reads MMFSRFFKAVPARAPAFSSPLPVYQARTM. In terms of domain architecture, Glutamine amidotransferase type-1 spans 219–406; it reads HVAVLDCGVK…IDSVKKYKNS (188 aa). Cys295 acts as the Nucleophile in catalysis. Catalysis depends on residues His379 and Glu381.

It belongs to the CarA family. As to quaternary structure, heterodimer composed of 2 chains; the small (or glutamine) chain promotes the hydrolysis of glutamine to ammonia, which is used by the large (or ammonia) chain to synthesize carbamoyl phosphate.

It is found in the mitochondrion matrix. It carries out the reaction hydrogencarbonate + L-glutamine + 2 ATP + H2O = carbamoyl phosphate + L-glutamate + 2 ADP + phosphate + 2 H(+). It catalyses the reaction L-glutamine + H2O = L-glutamate + NH4(+). It functions in the pathway amino-acid biosynthesis; L-arginine biosynthesis; carbamoyl phosphate from bicarbonate: step 1/1. Functionally, small subunit of the arginine-specific carbamoyl phosphate synthase (CPSase). CPSase catalyzes the formation of carbamoyl phosphate from the ammonia moiety of glutamine, carbonate, and phosphate donated by ATP, the first step of the arginine biosynthetic pathway. The small subunit (glutamine amidotransferase) binds and cleaves glutamine to supply the large subunit with the substrate ammonia. In Emericella nidulans (strain FGSC A4 / ATCC 38163 / CBS 112.46 / NRRL 194 / M139) (Aspergillus nidulans), this protein is Carbamoyl phosphate synthase arginine-specific small chain (cpa-1).